A 275-amino-acid chain; its full sequence is 3-deoxy-manno-octulosonate cytidylyltransferase (275 aa).

The protein belongs to the KdsB family.

Its subcellular location is the cytoplasm. The catalysed reaction is 3-deoxy-alpha-D-manno-oct-2-ulosonate + CTP = CMP-3-deoxy-beta-D-manno-octulosonate + diphosphate. Its pathway is nucleotide-sugar biosynthesis; CMP-3-deoxy-D-manno-octulosonate biosynthesis; CMP-3-deoxy-D-manno-octulosonate from 3-deoxy-D-manno-octulosonate and CTP: step 1/1. It functions in the pathway bacterial outer membrane biogenesis; lipopolysaccharide biosynthesis. Its function is as follows. Activates KDO (a required 8-carbon sugar) for incorporation into bacterial lipopolysaccharide in Gram-negative bacteria. The chain is 3-deoxy-manno-octulosonate cytidylyltransferase from Psychrobacter sp. (strain PRwf-1).